The sequence spans 202 residues: Josephin-1 (202 aa).

Position 15 is a phosphoserine (serine 15). In terms of domain architecture, Josephin spans 23–202 (PPQIYHEKQR…EAHQSWRADV (180 aa)). The active-site Nucleophile is cysteine 36. Histidine 139 functions as the Proton acceptor in the catalytic mechanism.

As to quaternary structure, interacts with beta-actin/ACTB. Post-translationally, monoubiquitinated. Ubiquitination activates deubiquitination activity in vitro.

The protein localises to the cell membrane. It is found in the cytoplasm. It carries out the reaction Thiol-dependent hydrolysis of ester, thioester, amide, peptide and isopeptide bonds formed by the C-terminal Gly of ubiquitin (a 76-residue protein attached to proteins as an intracellular targeting signal).. In terms of biological role, deubiquitinates monoubiquitinated probes (in vitro). When ubiquitinated, cleaves 'Lys-63'-linked and 'Lys-48'-linked poly-ubiquitin chains (in vitro), hence may act as a deubiquitinating enzyme. May increase macropinocytosis and suppress clathrin- and caveolae-mediated endocytosis. May enhance membrane dynamics and cell motility independently of its catalytic activity. In Bos taurus (Bovine), this protein is Josephin-1 (JOSD1).